The following is a 153-amino-acid chain: ORM1-like protein 2 (153 aa).

The Cytoplasmic portion of the chain corresponds to 1 to 21; that stretch reads MNVGVAHSEVNPNTRVMNSRG. The next 2 helical transmembrane spans lie at 22-42 and 43-63; these read IWLA…SIPF and FSIP…TYVF. The Cytoplasmic segment spans residues 64–105; sequence LHTVKGTPFETPDQGKARLLTHWEQMDYGLQFTSSRKFLSIS. Residues 106–126 form a helical membrane-spanning segment; that stretch reads PIVLYLLASFYTKYDAAHFLI. The Extracellular segment spans residues 127 to 153; it reads NTASLLSVLLPKLPQFHGVRVFGINKY.

This sequence belongs to the ORM family. In terms of assembly, ceramide-sensitive subunit of the serine palmitoyltransferase (SPT) complex, which is also composed of SPTLC1, SPTLC2/3 and SPTSSA/B. As to expression, widely expressed. Expressed in adult and fetal heart, brain, lung, liver, skeletal muscle and kidney. Expressed in adult pancreas and placenta and in fetal spleen abd thymus.

It is found in the endoplasmic reticulum membrane. Plays an essential role in the homeostatic regulation of sphingolipid de novo biosynthesis by modulating the activity of the serine palmitoyltransferase (SPT) in response to ceramide levels. When complexed to SPT, the binding of ceramides to its N-terminus stabilizes a conformation that block SPT substrate entry, hence preventing SPT catalytic activity. Through this mechanism, maintains ceramide levels at sufficient concentrations for the production of complex sphingolipids, but which prevents the accumulation of ceramides to levels that trigger apoptosis. In Homo sapiens (Human), this protein is ORM1-like protein 2 (ORMDL2).